The sequence spans 386 residues: Acetate kinase (386 aa).

Residue Asn7 coordinates Mg(2+). Position 14 (Lys14) interacts with ATP. Arg78 provides a ligand contact to substrate. Residue Asp135 is the Proton donor/acceptor of the active site. ATP contacts are provided by residues 195 to 199 (HLGNG), 268 to 270 (DMR), and 316 to 320 (GIGEN). Glu370 lines the Mg(2+) pocket.

The protein belongs to the acetokinase family. Homodimer. It depends on Mg(2+) as a cofactor. The cofactor is Mn(2+).

The protein localises to the cytoplasm. It catalyses the reaction acetate + ATP = acetyl phosphate + ADP. It participates in metabolic intermediate biosynthesis; acetyl-CoA biosynthesis; acetyl-CoA from acetate: step 1/2. In terms of biological role, catalyzes the formation of acetyl phosphate from acetate and ATP. Can also catalyze the reverse reaction. In Arthrobacter sp. (strain FB24), this protein is Acetate kinase.